A 750-amino-acid chain; its full sequence is MMRQYELVERVQRYKPDVNEALLNKAYVYAMQKHGSQKRASGDPYFSHPLEVAAILTDMHLDEATIAIALLHDTIEDTTATRQEIDQLFGPEIGKLVEGLTKLKKLDLVSKKAVQAENLRKLLLAISEDVRVLLVKLADRLHNMRTLGVMCEDKRLRIAEETMDIYAPLAGRMGMQDMREELEELAFRYINPDAWRAVTDRLAELLEKNRGLLQKIETDLSEIFEKNGIKASVKSRQKKPWSVFRKMETKGLSFEQLSDIFGFRVMVDTVQDCYRALGLIHTTWSMVPGRFKDYISTPKQNDYRSIHTTIIGPSRQRIELQIRTREMDEIAEFGVAAHSIYKDRGSANNPHKISTETNAYAWLRQTIEQLSEGDNPEEFLEHTKLELFQDQVFCFTPKGRLIALPRGATPIDFAYAVHTDIGDSCVGAKVNGRIMPLMTELKNGDEVDIIRSKAQVPPAAWESLVATGKARAAIRRATRSAVRKQYSGLGMRILERAFERAGKPFSKDILKPGLPRLARKDVEDVLAAVGRGELPSTDVVKAVYPDYQDTRVTTQNNPAKAGEKGWFNIQNAAGMIFKVPEGGEGAAAKVDPAATTPKPGKRALPIRGTNPDLPVRFAPEGAVPGDRIVGILQPGAGITIYPIQSPALTAYDDQPERWIDVRWDIDDQMSERFPARISVSAINSPGSLAKIAQIAAANDANIHNLSMVRTAPDFTEMIIDVEVWDLKHLNRIISQLKESASVSSAKRVNG.

The HD domain maps to Y45–M144. Residues D390 to R451 enclose the TGS domain. Positions A587–L613 are disordered. An ACT domain is found at R676–G750.

The protein belongs to the RelA/SpoT family.

It catalyses the reaction GTP + ATP = guanosine 3'-diphosphate 5'-triphosphate + AMP. In terms of biological role, functions as a (p)ppGpp synthase. In eubacteria ppGpp (guanosine 3'-diphosphate 5'-diphosphate) is a mediator of the stringent response that coordinates a variety of cellular activities in response to changes in nutritional abundance. It is necessary for persistence in mice, essential for intracellular growth of Brucella and required for expression of the type IV secretion system VirB and therefore plays a role in adaptation of Brucella to its intracellular host environment. The sequence is that of GTP pyrophosphokinase rsh (rsh) from Brucella suis biovar 1 (strain 1330).